A 122-amino-acid chain; its full sequence is Copper metallothionein 1 (122 aa).

The tract at residues 1 to 35 (MACNCPPQKNTACCSTSEAQDKCTCQKGNCECKAC) is cys-rich copper-binding 1. The interval 36-50 (PNSTKTSESGGKAST) is spacer B1. Positions 51–72 (CNCGGSGEACTCPPGQCACDKC) are cys-rich copper-binding 2. A spacer B2 region spans residues 73-81 (PKKAKSVST). A cys-rich copper-binding 3 region spans residues 82–103 (CGCGGSGAACSCPPGKCACDNC). The interval 104-113 (PKQAQEKVSS) is spacer B3. Positions 114–122 (CACSGSGAA) are cys-rich copper-binding 4.

This sequence belongs to the metallothionein superfamily.

Its subcellular location is the cytoplasm. It is found in the cell cortex. Its function is as follows. Copper metallothionein that protects the cell against copper toxicity by tightly chelating copper ions. Required for antioxidant-mediated growth rescue in the presence of fluconazole. Acts as a critical factors for lung colonization and virulence. The chain is Copper metallothionein 1 from Cryptococcus neoformans var. grubii serotype A (strain H99 / ATCC 208821 / CBS 10515 / FGSC 9487) (Filobasidiella neoformans var. grubii).